We begin with the raw amino-acid sequence, 536 residues long: MTKFIFVTGGVVSSLGKGITASSLGRLLKDRGLNVTIQKFDPYLNVDPGTMSPYQHGEVFVTDDGAETDLDLGHYERFIDINLNKFSNVTAGKVYSHVLKKERRGDYLGGTVQVIPHITNEIKERLLLAGESTNADVVITEIGGTTGDIESLPFIEAIRQIRSDLGRENVMYVHCTLLPYIKAAGEMKTKPTQHSVKELRGLGIQPDLIVVRTEYEMTQDLKDKIALFCDINKESVIECRDADSLYEIPLQLSQQNMDDIVIKRLQLNAKYETQLDEWKQLLDIVNNLDGKITIGLVGKYVSLQDAYLSVVESLKHAGYPFAKDIDIRWIDSSEVTDENAAEYLADVDGILVPGGFGFRASEGKISAIKYARENNVPFFGICLGMQLATVEFSRNVLGLEGAHSAELDPATPYPIIDLLPEQKDIEDLGGTLRLGLYPCSIKEGTLAQDVYGKAEIEERHRHRYEFNNDYREQLEANGMVISGTSPDGRLVEMVEIPTNDFFIACQFHPEFLSRPNRPHPIFKSFIEASLKYQQNK.

The segment at 1 to 267 is amidoligase domain; sequence MTKFIFVTGG…DDIVIKRLQL (267 aa). A CTP-binding site is contributed by Ser-13. Residue Ser-13 participates in UTP binding. 14-19 serves as a coordination point for ATP; the sequence is SLGKGI. Residue Tyr-54 participates in L-glutamine binding. Asp-71 provides a ligand contact to ATP. Residues Asp-71 and Glu-141 each coordinate Mg(2+). Residues 148–150, 188–193, and Lys-224 each bind CTP; these read DIE and KTKPTQ. UTP is bound by residues 188-193 and Lys-224; that span reads KTKPTQ. 240–242 lines the ATP pocket; the sequence is RDA. The Glutamine amidotransferase type-1 domain occupies 293-535; that stretch reads TIGLVGKYVS…IEASLKYQQN (243 aa). Residue Gly-355 participates in L-glutamine binding. Catalysis depends on Cys-382, which acts as the Nucleophile; for glutamine hydrolysis. L-glutamine is bound by residues 383-386, Glu-406, and Arg-463; that span reads LGMQ. Residues His-508 and Glu-510 contribute to the active site.

This sequence belongs to the CTP synthase family. As to quaternary structure, homotetramer.

It carries out the reaction UTP + L-glutamine + ATP + H2O = CTP + L-glutamate + ADP + phosphate + 2 H(+). It catalyses the reaction L-glutamine + H2O = L-glutamate + NH4(+). The enzyme catalyses UTP + NH4(+) + ATP = CTP + ADP + phosphate + 2 H(+). It participates in pyrimidine metabolism; CTP biosynthesis via de novo pathway; CTP from UDP: step 2/2. Allosterically activated by GTP, when glutamine is the substrate; GTP has no effect on the reaction when ammonia is the substrate. The allosteric effector GTP functions by stabilizing the protein conformation that binds the tetrahedral intermediate(s) formed during glutamine hydrolysis. Inhibited by the product CTP, via allosteric rather than competitive inhibition. Its function is as follows. Catalyzes the ATP-dependent amination of UTP to CTP with either L-glutamine or ammonia as the source of nitrogen. Regulates intracellular CTP levels through interactions with the four ribonucleotide triphosphates. The polypeptide is CTP synthase (Staphylococcus aureus (strain COL)).